The primary structure comprises 4749 residues: E3 ubiquitin-protein ligase MYCBP2 (4749 aa).

Disordered stretches follow at residues 87–127 (DRDQ…RSKS), 170–192 (AASKNSVQSGESDSDEEEESREP), and 609–628 (ASKGEDGESTKSRRQSKPYK). Over residues 100–124 (SRNKKILNKKKLKRKQKSKSKVKTR) the composition is skewed to basic residues. A phosphoserine mark is found at Ser127, Ser178, Ser181, and Ser183. 5 RCC1 repeats span residues 600 to 655 (DGSV…VISK), 699 to 755 (NGEV…MMCP), 907 to 957 (KRDK…VLME), 958 to 1009 (NGDV…LLMD), and 1011 to 1066 (QVFT…LRID). A compositionally biased stretch (basic residues) spans 899–910 (SHPAQLKHKRDK). The disordered stretch occupies residues 899–928 (SHPAQLKHKRDKHKDGSGDRGEKDASKITT). The span at 911-924 (HKDGSGDRGEKDAS) shows a compositional bias: basic and acidic residues. The interval 1235–1386 (NRFESHGGGW…GQIPQLLYRL (152 aa)) is PHR domain 1. Position 1621 is a phosphoserine (Ser1621). Residues 1723 to 1881 (NRFTKTSQGR…GQIPQILYYR (159 aa)) are PHR domain 2. Residues Cys1745 and Cys1860 are joined by a disulfide bond. Positions 2018–2544 (AVIESEHPYK…FNQHLGKSLL (527 aa)) are RAE1 binding. Disordered regions lie at residues 2313–2336 (KKTSLQQDQGKKCQRIPGSPSAAA) and 2780–3084 (QQRQ…KGDG). A Filamin repeat occupies 2331–2438 (SPSAAASSAD…IDAGLEVKVK (108 aa)). The span at 2780-2803 (QQRQLQSDRGTISTSSRPVSTSGK) shows a compositional bias: polar residues. Residues 2814–2832 (VKPDGHVSRTPADQKKPRG) show a composition bias toward basic and acidic residues. Ser2841 carries the phosphoserine modification. Over residues 2847 to 2857 (DAAKLRSDSHS) the composition is skewed to basic and acidic residues. Positions 2858–2879 (RSLSPNHNTLQTLKSDGRTSSG) are enriched in polar residues. Residues Ser2859 and Ser2861 each carry the phosphoserine modification. Composition is skewed to low complexity over residues 2884 to 2894 (SPGPGSRSSSP) and 2904 to 2917 (SSPSGASSPRSSSP). Residues Ser2905 and Ser2911 each carry the phosphoserine modification. Polar residues predominate over residues 2918–2929 (QDKNLPQKSTAP). Basic and acidic residues predominate over residues 2932-2943 (TKLDPPRERSKS). Ser2941, Ser2943, and Ser2992 each carry phosphoserine. The segment covering 3008 to 3021 (CTSSTLKTNGVTDS) has biased composition (polar residues). Basic and acidic residues-rich tracts occupy residues 3027–3037 (GDLKSVDEGSN) and 3047–3056 (PLKDEQEMRA). A Phosphoserine modification is found at Ser3057. Positions 3060–3073 (ISRKCANRHTRPKK) are enriched in basic residues. Residues Ser3162, Ser3550, and Ser3577 each carry the phosphoserine modification. Residues 3677–3700 (VEAEEDEDEDNKSNKENAEQEKDT) are disordered. Basic and acidic residues predominate over residues 3687-3700 (NKSNKENAEQEKDT). One can recognise a DOC domain in the interval 3789 to 3967 (FSISVQSGFE…SVAQQRSCEA (179 aa)). The disordered stretch occupies residues 3986 to 4007 (SGDAEPTPEQEEKALLSSPEGE). A Phosphothreonine modification is found at Thr3992. A phosphoserine mark is found at Ser4002 and Ser4003. Positions 4499, 4502, 4517, 4519, 4522, 4525, 4546, 4549, 4615, and 4618 each coordinate Zn(2+). An RING-type; atypical zinc finger spans residues 4499-4550 (CMICFTEALSAAPAIQLDCSHVFHLQCCRRVLENRWLGPRITFGFISCPICK). The tract at residues 4610-4747 (YAYYVCYKCR…LGCGVCRNAH (138 aa)) is tandem cysteine domain. Cys4629 is an active-site residue. Positions 4646, 4649, 4658, 4661, 4670, 4673, and 4674 each coordinate Zn(2+). Residue Cys4681 is part of the active site. The Zn(2+) site is built by Cys4688, Cys4691, Cys4709, Cys4723, His4729, Cys4740, and Cys4743.

Belongs to the RING-Cys relay (RCR) family. As to quaternary structure, interacts with MYC. Interacts with TSC2 (tuberin) when TSC2 is in complex with TSC1 (hamartin). Interacts with FBXO45. Interacts with RAE1. Interacts with CPNE1 (via VWFA domain) and CPNE4 (via VWFA domain). Interacts with (sumoylated) RANGAP1; interaction with sumoylated RANGAP1 inhibits E3 ubiquitin-protein ligase activity and promotes MYCBP2 translocation to the nucleus. Interacts with RAN. Interacts with ATP13A2; the interaction inhibits the ubiquitination of TSC2 by MYCBP2. Interacts with USP11. In terms of processing, autoubiquitinated. In terms of tissue distribution, expression is mostly restricted to the nervous system, including expression in motor and sensory axons. During postnatal development, expression is particularly strong in the cerebellum, hippocampus and retina. Lower levels of expression are observed throughout the cerebral cortex.

Its subcellular location is the nucleus. The protein localises to the cell projection. The protein resides in the axon. It localises to the cytoplasm. It is found in the cytoskeleton. The catalysed reaction is [E2 ubiquitin-conjugating enzyme]-S-ubiquitinyl-L-cysteine + [acceptor protein]-L-threonine = [E2 ubiquitin-conjugating enzyme]-L-cysteine + [acceptor protein]-3-O-ubiquitinyl-L-threonine.. It functions in the pathway protein modification; protein ubiquitination. Atypical E3 ubiquitin-protein ligase which specifically mediates ubiquitination of threonine and serine residues on target proteins, instead of ubiquitinating lysine residues. Shows esterification activity towards both threonine and serine, with a preference for threonine, and acts via two essential catalytic cysteine residues that relay ubiquitin to its substrate via thioester intermediates. Interacts with the E2 enzymes UBE2D1, UBE2D3, UBE2E1 and UBE2L3. Plays a key role in neural development, probably by mediating ubiquitination of threonine residues on target proteins. Involved in different processes such as regulation of neurite outgrowth, synaptic growth, synaptogenesis and axon degeneration. Required for the formation of major central nervous system axon tracts. Required for proper axon growth by regulating axon navigation and axon branching: acts by regulating the subcellular location and stability of MAP3K12/DLK. Required for proper localization of retinogeniculate projections but not for eye-specific segregation. Regulates axon guidance in the olfactory system. Involved in Wallerian axon degeneration, an evolutionarily conserved process that drives the loss of damaged axons: acts by promoting destabilization of NMNAT2, probably via ubiquitination of NMNAT2. Catalyzes ubiquitination of threonine and/or serine residues on NMNAT2, consequences of threonine and/or serine ubiquitination are however unknown. Regulates the internalization of TRPV1 in peripheral sensory neurons. May mediate ubiquitination and subsequent proteasomal degradation of TSC2/tuberin. Independently of the E3 ubiquitin-protein ligase activity, also acts as a guanosine exchange factor (GEF) for RAN in neurons of dorsal root ganglia. May function as a facilitator or regulator of transcriptional activation by MYC. Acts in concert with HUWE1 to regulate the circadian clock gene expression by promoting the lithium-induced ubiquination and degradation of NR1D1. The sequence is that of E3 ubiquitin-protein ligase MYCBP2 from Mus musculus (Mouse).